The chain runs to 501 residues: Pyruvate kinase (501 aa).

Substrate is bound at residue R50. K(+) is bound by residues N52, S54, D85, and T86. ATP is bound at residue 52–55 (NFSH). ATP-binding residues include R92 and K178. E243 provides a ligand contact to Mg(2+). 3 residues coordinate substrate: G266, D267, and T299. A Mg(2+)-binding site is contributed by D267.

The protein belongs to the pyruvate kinase family. In terms of assembly, homotetramer. Mg(2+) serves as cofactor. The cofactor is K(+).

The enzyme catalyses pyruvate + ATP = phosphoenolpyruvate + ADP + H(+). It participates in carbohydrate degradation; glycolysis; pyruvate from D-glyceraldehyde 3-phosphate: step 5/5. This Lachancea kluyveri (strain ATCC 58438 / CBS 3082 / BCRC 21498 / NBRC 1685 / JCM 7257 / NCYC 543 / NRRL Y-12651) (Yeast) protein is Pyruvate kinase (PYK1).